A 138-amino-acid polypeptide reads, in one-letter code: Enhancer of split malpha protein (138 aa).

Belongs to the M4-like protein family.

Functionally, part of the Notch signaling pathway. This chain is Enhancer of split malpha protein, found in Drosophila melanogaster (Fruit fly).